Reading from the N-terminus, the 309-residue chain is Porphobilinogen deaminase (309 aa).

S-(dipyrrolylmethanemethyl)cysteine is present on cysteine 242.

It belongs to the HMBS family. Monomer. Dipyrromethane is required as a cofactor.

It carries out the reaction 4 porphobilinogen + H2O = hydroxymethylbilane + 4 NH4(+). It participates in porphyrin-containing compound metabolism; protoporphyrin-IX biosynthesis; coproporphyrinogen-III from 5-aminolevulinate: step 2/4. Tetrapolymerization of the monopyrrole PBG into the hydroxymethylbilane pre-uroporphyrinogen in several discrete steps. This Legionella pneumophila (strain Paris) protein is Porphobilinogen deaminase.